A 356-amino-acid chain; its full sequence is tRNA N6-adenosine threonylcarbamoyltransferase (356 aa).

Fe cation contacts are provided by His110 and His114. Residues Leu133–Gly137, Asp166, Gly179, and Asn276 each bind substrate. A Fe cation-binding site is contributed by Asp304.

Belongs to the KAE1 / TsaD family. Fe(2+) is required as a cofactor.

The protein resides in the cytoplasm. It carries out the reaction L-threonylcarbamoyladenylate + adenosine(37) in tRNA = N(6)-L-threonylcarbamoyladenosine(37) in tRNA + AMP + H(+). Required for the formation of a threonylcarbamoyl group on adenosine at position 37 (t(6)A37) in tRNAs that read codons beginning with adenine. Is involved in the transfer of the threonylcarbamoyl moiety of threonylcarbamoyl-AMP (TC-AMP) to the N6 group of A37, together with TsaE and TsaB. TsaD likely plays a direct catalytic role in this reaction. The sequence is that of tRNA N6-adenosine threonylcarbamoyltransferase from Teredinibacter turnerae (strain ATCC 39867 / T7901).